We begin with the raw amino-acid sequence, 618 residues long: Glutathione-regulated potassium-efflux system protein (618 aa).

The next 12 membrane-spanning stretches (helical) occupy residues 6–26, 32–52, 55–75, 94–114, 118–138, 152–172, 186–206, 227–247, 274–294, 298–318, 336–356, and 362–382; these read NPEL…VPLF, GSVL…FGIV, PTAV…IIGL, LLQV…LLGL, VSFI…MQSL, VIST…SVAF, WVSI…GKWL, ALLV…SMAM, GLLL…HLVF, ILLL…VYII, MAHG…AEVI, and ATFT…AQIA. One can recognise an RCK N-terminal domain in the interval 409–525; the sequence is EDNVLVIGFG…LIKQDVDFIV (117 aa).

It belongs to the monovalent cation:proton antiporter 2 (CPA2) transporter (TC 2.A.37) family.

It localises to the cell inner membrane. Functionally, transport system that facilitate potassium-efflux, possibly by potassium-proton antiport. This Haemophilus influenzae (strain ATCC 51907 / DSM 11121 / KW20 / Rd) protein is Glutathione-regulated potassium-efflux system protein (kefBC).